Here is a 556-residue protein sequence, read N- to C-terminus: Oxygen-dependent choline dehydrogenase (556 aa).

4–33 (DYIIIGAGSAGNVLATRLTEDPNTSVLLLE) contributes to the FAD binding site. The active-site Proton acceptor is histidine 473.

It belongs to the GMC oxidoreductase family. The cofactor is FAD.

The enzyme catalyses choline + A = betaine aldehyde + AH2. The catalysed reaction is betaine aldehyde + NAD(+) + H2O = glycine betaine + NADH + 2 H(+). Its pathway is amine and polyamine biosynthesis; betaine biosynthesis via choline pathway; betaine aldehyde from choline (cytochrome c reductase route): step 1/1. In terms of biological role, involved in the biosynthesis of the osmoprotectant glycine betaine. Catalyzes the oxidation of choline to betaine aldehyde and betaine aldehyde to glycine betaine at the same rate. The chain is Oxygen-dependent choline dehydrogenase from Escherichia coli (strain K12 / DH10B).